The sequence spans 311 residues: Pyrimidine-specific ribonucleoside hydrolase RihA (311 aa).

Histidine 240 is a catalytic residue.

This sequence belongs to the IUNH family. RihA subfamily.

Hydrolyzes with equal efficiency cytidine or uridine to ribose and cytosine or uracil, respectively. The sequence is that of Pyrimidine-specific ribonucleoside hydrolase RihA from Escherichia coli O45:K1 (strain S88 / ExPEC).